The primary structure comprises 362 residues: uncharacterized protein (362 aa).

Over residues 314–323 (GEEKEPKQES) the composition is skewed to basic and acidic residues. Positions 314-362 (GEEKEPKQESQEQLFNPFTIDEMLTEEQQQQQEEENNATEEEGDTVKLG) are disordered. A compositionally biased stretch (acidic residues) spans 345-356 (QEEENNATEEEG).

This is an uncharacterized protein from Acidianus two-tailed virus (ATV).